The following is a 298-amino-acid chain: NFU1 iron-sulfur cluster scaffold homolog, mitochondrial (298 aa).

The segment at 190–258 (IKELLDTRIR…IPEVESVEQV (69 aa)) is nifU. Positions 227 and 230 each coordinate [4Fe-4S] cluster. Positions 279-288 (QKESVNQPNA) are enriched in polar residues. The interval 279-298 (QKESVNQPNAPVNIGGGTPN) is disordered.

This sequence belongs to the NifU family.

It localises to the mitochondrion. Molecular scaffold for [Fe-S] cluster assembly of mitochondrial iron-sulfur proteins. In Drosophila virilis (Fruit fly), this protein is NFU1 iron-sulfur cluster scaffold homolog, mitochondrial.